A 206-amino-acid polypeptide reads, in one-letter code: Cytochrome c biogenesis ATP-binding export protein CcmA (206 aa).

Positions V3 to L206 constitute an ABC transporter domain. G35–T42 contacts ATP.

It belongs to the ABC transporter superfamily. CcmA exporter (TC 3.A.1.107) family. In terms of assembly, the complex is composed of two ATP-binding proteins (CcmA) and two transmembrane proteins (CcmB).

The protein resides in the cell inner membrane. It catalyses the reaction heme b(in) + ATP + H2O = heme b(out) + ADP + phosphate + H(+). In terms of biological role, part of the ABC transporter complex CcmAB involved in the biogenesis of c-type cytochromes; once thought to export heme, this seems not to be the case, but its exact role is uncertain. Responsible for energy coupling to the transport system. The polypeptide is Cytochrome c biogenesis ATP-binding export protein CcmA (Roseobacter denitrificans (strain ATCC 33942 / OCh 114) (Erythrobacter sp. (strain OCh 114))).